Reading from the N-terminus, the 1724-residue chain is Protein CHROMATIN REMODELING 5 (1724 aa).

Disordered regions lie at residues 24–88 and 104–415; these read QNAA…QSST and DCQP…DDIE. Positions 25–34 are enriched in polar residues; the sequence is NAATFQSSPL. Basic and acidic residues predominate over residues 126-144; the sequence is EAYHSEDNHSNDRSEKLDS. Positions 138-164 form a coiled coil; sequence RSEKLDSENENDNENEEEDNEMNKHQS. Composition is skewed to acidic residues over residues 145 to 157, 170 to 186, 239 to 264, and 278 to 297; these read ENEN…EEDN, PADE…DEDN, ADMD…DAAD, and VSDE…YEDD. Over residues 301–313 the composition is skewed to basic residues; that stretch reads KKPKVRQQSKGFR. A Nuclear localization signal 1 motif is present at residues 320–327; that stretch reads ERKSFHVS. Acidic residues predominate over residues 337–350; it reads QDDDSEEDSENDND. Residues 362–376 are compositionally biased toward polar residues; that stretch reads TLRQNNGRSTNTIGQ. The segment covering 403-412 has biased composition (basic and acidic residues); it reads DGKNRKNQKD. One can recognise a Chromo 1 domain in the interval 420–499; the sequence is DVIEKVLWHQ…FKKVLNYTKK (80 aa). Residues 505–525 adopt a coiled-coil conformation; sequence RYRTALSREEIEVNDVSKEMD. A Chromo 2 domain is found at 533–597; the sequence is SQVERIIADR…REVSIAVQGK (65 aa). A Helicase ATP-binding domain is found at 637-809; that stretch reads VNSWLNDTNV…WALLHFLDPG (173 aa). An ATP-binding site is contributed by 650–657; it reads DEMGLGKT. The DEAH box signature appears at 760-763; it reads DEAH. In terms of domain architecture, Helicase C-terminal spans 943 to 1094; sequence ILDKLLVRLR…HLVIQKLNAE (152 aa). Positions 1126–1163 form a coiled coil; the sequence is KEDKNDEESKKRLLSMDIDEILERAEQVEEKHTDETEH. A disordered region spans residues 1199-1245; that stretch reads ALAPRAARNTKSYVDPSHPDRTSKRKKKGSEPPEHTERSQKRRKTEY. 2 short sequence motifs (nuclear localization signal) span residues 1224–1231 and 1348–1355; these read KKKGSEPP and LKRVQGLQ. Residues 1227–1237 are compositionally biased toward basic and acidic residues; that stretch reads GSEPPEHTERS. Disordered regions lie at residues 1480 to 1524 and 1654 to 1724; these read QFKA…EMSD and KFKT…FPPR. A compositionally biased stretch (basic and acidic residues) spans 1504-1520; sequence DGPRKTQKAEPLVKEEG. Polar residues predominate over residues 1658–1667; sequence AGNSQGSQQV. Residues 1669 to 1691 show a composition bias toward basic and acidic residues; sequence KGIDTAKFEAWKRRRRTENDVQT. Over residues 1692-1702 the composition is skewed to polar residues; it reads ERPTITNSNSL.

It belongs to the SNF2/RAD54 helicase family.

Its subcellular location is the nucleus. In terms of biological role, DNA-binding helicase that specifically binds to the promoter of target genes, leading to chromatin remodeling, possibly by promoting deposition of histone H3.3. Probable chromatin remodeling factor. The chain is Protein CHROMATIN REMODELING 5 from Arabidopsis thaliana (Mouse-ear cress).